A 534-amino-acid chain; its full sequence is Nuclear polyadenylated RNA-binding protein 4 (534 aa).

Residues 1–154 are disordered; it reads MSSDEEDFND…TKEERSKADL (154 aa). A phosphoserine mark is found at Ser2 and Ser3. Positions 13–30 are enriched in basic and acidic residues; it reads GDDKPTTTEEVKKEEEQN. The segment covering 37 to 78 has biased composition (low complexity); sequence SQLDQLAALQALSSSLNKLNNPNSNNSSSNNSNQDTSSSKQD. Phosphoserine is present on residues Ser51 and Ser87. The span at 81 to 98 shows a compositional bias: basic and acidic residues; the sequence is ANDKEGSNEDTKNEKKQE. Low complexity-rich tracts occupy residues 99–112 and 121–144; these read SATS…ASSA and QLQQ…QVTQ. The span at 145-154 shows a compositional bias: basic and acidic residues; the sequence is TKEERSKADL. 2 consecutive RRM domains span residues 159 to 241 and 243 to 320; these read CKMF…EQDK and GKIF…RAEP. Ser206 carries the phosphoserine modification. 2 disordered regions span residues 316–354 and 415–534; these read KRAE…DFNQ and MPPN…PYNR. Low complexity predominate over residues 336-354; it reads GNNMNRRGGNFGNQGDFNQ. Residues 420–459 are compositionally biased toward polar residues; it reads MTLNQPQQDSNATQGSPAPSDSDNNKSNDVQTIGNTSNTD. At Thr458 the chain carries Phosphothreonine. Phosphoserine is present on residues Ser460 and Ser462. Over residues 460 to 475 the composition is skewed to low complexity; it reads SGSPPLNLPNGPKGPS. Basic and acidic residues predominate over residues 478 to 505; sequence NDDHNSGYGYNRDRGDRDRNDRDRDYNH. Arg519 bears the Omega-N-methylarginine mark. Residues 523–534 are compositionally biased toward low complexity; sequence NRRNNGYHPYNR.

Interacts with NAM7. Post-translationally, methylated by HMT1. The methylation is required for nuclear export.

The protein resides in the cytoplasm. Its subcellular location is the nucleus. It is found in the stress granule. RNA-binding protein, which is involved in the polyadenylation-dependent pre-mRNA 3'-end formation and cooperates with the cleavage factor CFIA complex and the cleavage and polyadenylation factor (CPF) complex. May be involved in regulation of poly(A) site selection. Is involved in nonsense-mediated mRNA decay. Seems to bind to an RNA downstream sequence element (DSE) located 3' of a nonsense codon and may mark the transcript for decay. The polypeptide is Nuclear polyadenylated RNA-binding protein 4 (Saccharomyces cerevisiae (strain ATCC 204508 / S288c) (Baker's yeast)).